A 78-amino-acid chain; its full sequence is Exodeoxyribonuclease 7 small subunit (78 aa).

Belongs to the XseB family. Heterooligomer composed of large and small subunits.

It localises to the cytoplasm. It carries out the reaction Exonucleolytic cleavage in either 5'- to 3'- or 3'- to 5'-direction to yield nucleoside 5'-phosphates.. Its function is as follows. Bidirectionally degrades single-stranded DNA into large acid-insoluble oligonucleotides, which are then degraded further into small acid-soluble oligonucleotides. This chain is Exodeoxyribonuclease 7 small subunit, found in Desulfitobacterium hafniense (strain Y51).